The chain runs to 324 residues: Glutathione synthetase (324 aa).

An ATP-grasp domain is found at 124–309 (KLAIAQFREF…VAGMFIDALE (186 aa)). An ATP-binding site is contributed by 150–206 (HAEQGDVIFKPLDGMGGAGIFRVGADGMNLGSVIETLTHNGTRTVMAQQYIPAIRDG). Positions 280 and 282 each coordinate Mg(2+).

It belongs to the prokaryotic GSH synthase family. It depends on Mg(2+) as a cofactor. The cofactor is Mn(2+).

The catalysed reaction is gamma-L-glutamyl-L-cysteine + glycine + ATP = glutathione + ADP + phosphate + H(+). It participates in sulfur metabolism; glutathione biosynthesis; glutathione from L-cysteine and L-glutamate: step 2/2. The chain is Glutathione synthetase from Ralstonia nicotianae (strain ATCC BAA-1114 / GMI1000) (Ralstonia solanacearum).